The chain runs to 561 residues: MSPALAAGLQIASVVAVLALVYVPLGDYMARVYTSSSDLRAESWLYRLARVDPRAEQTWCGYAGSVLGFSLAGVLVLYVLQRIQGVLPLSHGLAGVSPAVAFNTAVSFVTNTNWQSYVPETTMSPLTQSAGLAVQNFVSAAVGMAVAVALIRGLVRVGRGGEVGNFWVDLTRGTLRILLPLAFVIALILLSQGVIQSYRSGFTGVGLDGRPVTTALAPVASQEAIKELGTNGGGVLAANSAHPFENPTPLSNVVQILAILLIPVALTRTFGTMIGNRRQGLTVLAVMAGIYAVILGVTTAAESGARGAAATAAGAMLEGKEVRFGIPGSVLFAVSTTGTSTGAVNSAHDSMSPLGGGAVLVNMLLGEIAPGGVGSGLYGILVLAVIAVFVGGLLVGRTPEFLGKKLRRREITLAALAVLVMPALVLIGTAITVVLPETAAALGNSGDPGTPGAVHGFSEVLYAYASASNNNGSAFGGLTVTSDWFQSSLGLCMLFGRFLPILFVLALAGSLAAQPRTPATAGTLPTAGAGFAGLLTGTVVLVAALTFFPVLALGPIAEALQ.

11 helical membrane passes run 5–25 (LAAG…YVPL), 60–80 (CGYA…LYVL), 86–106 (VLPL…NTAV), 131–151 (GLAV…VALI), 177–197 (ILLP…VIQS), 247–267 (PTPL…VALT), 281–301 (LTVL…TTAA), 376–396 (GLYG…LLVG), 415–435 (ALAV…TVVL), 489–509 (LGLC…ALAG), and 531–551 (FAGL…FPVL).

This sequence belongs to the KdpA family. The system is composed of three essential subunits: KdpA, KdpB and KdpC.

It is found in the cell membrane. Its function is as follows. Part of the high-affinity ATP-driven potassium transport (or Kdp) system, which catalyzes the hydrolysis of ATP coupled with the electrogenic transport of potassium into the cytoplasm. This subunit binds the extracellular potassium ions and delivers the ions to the membrane domain of KdpB through an intramembrane tunnel. The polypeptide is Potassium-transporting ATPase potassium-binding subunit (Nocardia farcinica (strain IFM 10152)).